The following is a 291-amino-acid chain: 33 kDa chaperonin (291 aa).

Cystine bridges form between Cys235/Cys237 and Cys268/Cys271.

This sequence belongs to the HSP33 family. In terms of processing, under oxidizing conditions two disulfide bonds are formed involving the reactive cysteines. Under reducing conditions zinc is bound to the reactive cysteines and the protein is inactive.

It is found in the cytoplasm. Functionally, redox regulated molecular chaperone. Protects both thermally unfolding and oxidatively damaged proteins from irreversible aggregation. Plays an important role in the bacterial defense system toward oxidative stress. This chain is 33 kDa chaperonin, found in Streptococcus agalactiae serotype III (strain NEM316).